The following is a 242-amino-acid chain: Protein LST7 (242 aa).

One can recognise a uDENN FLCN/SMCR8-type domain in the interval 48 to 212 (SCLLQFPEES…NKSKFGRNLV (165 aa)).

Functionally, required for the nitrogen-regulated transport of amino acid permeases GAP1 and PUT4 from the Golgi to the cell surface. The chain is Protein LST7 (LST7) from Saccharomyces cerevisiae (strain ATCC 204508 / S288c) (Baker's yeast).